We begin with the raw amino-acid sequence, 667 residues long: UvrABC system protein B (667 aa).

In terms of domain architecture, Helicase ATP-binding spans Ala31–Gln414. Residue Gly44 to Thr51 coordinates ATP. The Beta-hairpin signature appears at Tyr97 to Ile120. The 163-residue stretch at Gln435 to Ile597 folds into the Helicase C-terminal domain. Positions Leu630–Gln665 constitute a UVR domain.

The protein belongs to the UvrB family. In terms of assembly, forms a heterotetramer with UvrA during the search for lesions. Interacts with UvrC in an incision complex.

The protein resides in the cytoplasm. In terms of biological role, the UvrABC repair system catalyzes the recognition and processing of DNA lesions. A damage recognition complex composed of 2 UvrA and 2 UvrB subunits scans DNA for abnormalities. Upon binding of the UvrA(2)B(2) complex to a putative damaged site, the DNA wraps around one UvrB monomer. DNA wrap is dependent on ATP binding by UvrB and probably causes local melting of the DNA helix, facilitating insertion of UvrB beta-hairpin between the DNA strands. Then UvrB probes one DNA strand for the presence of a lesion. If a lesion is found the UvrA subunits dissociate and the UvrB-DNA preincision complex is formed. This complex is subsequently bound by UvrC and the second UvrB is released. If no lesion is found, the DNA wraps around the other UvrB subunit that will check the other stand for damage. This chain is UvrABC system protein B, found in Lactiplantibacillus plantarum (strain ATCC BAA-793 / NCIMB 8826 / WCFS1) (Lactobacillus plantarum).